Here is a 47-residue protein sequence, read N- to C-terminus: Large ribosomal subunit protein eL40 (47 aa).

It belongs to the eukaryotic ribosomal protein eL40 family.

This Methanococcus vannielii (strain ATCC 35089 / DSM 1224 / JCM 13029 / OCM 148 / SB) protein is Large ribosomal subunit protein eL40.